A 93-amino-acid polypeptide reads, in one-letter code: Small ribosomal subunit protein uS19 (93 aa).

It belongs to the universal ribosomal protein uS19 family.

Its function is as follows. Protein S19 forms a complex with S13 that binds strongly to the 16S ribosomal RNA. The sequence is that of Small ribosomal subunit protein uS19 from Alkaliphilus oremlandii (strain OhILAs) (Clostridium oremlandii (strain OhILAs)).